A 212-amino-acid polypeptide reads, in one-letter code: Uridine kinase (212 aa).

13–20 (GGSGSGKT) lines the ATP pocket.

Belongs to the uridine kinase family.

It localises to the cytoplasm. The catalysed reaction is uridine + ATP = UMP + ADP + H(+). It catalyses the reaction cytidine + ATP = CMP + ADP + H(+). The protein operates within pyrimidine metabolism; CTP biosynthesis via salvage pathway; CTP from cytidine: step 1/3. It functions in the pathway pyrimidine metabolism; UMP biosynthesis via salvage pathway; UMP from uridine: step 1/1. This chain is Uridine kinase, found in Bacillus anthracis (strain A0248).